The sequence spans 262 residues: Oxidoreductase GME11367 (262 aa).

This sequence belongs to the avfA family.

The protein operates within secondary metabolite biosynthesis. Functionally, oxidoreductase; part of the gene cluster that mediates the biosynthesis of dibenzodioxocinones such as pestalotiollide B, a novel class of inhibitors against cholesterol ester transfer protein (CEPT). The biosynthesis initiates from condensation of acetate and malonate units catalyzed by the non-reducing PKS pks8/GME11356. Pks8/GME11356 lacks a thioesterase (TE) domain, which is important to the cyclizing of the third ring of atrochrysone carboxylic acid, and the esterase GME11355 might play the role of TE and catalyzes the cyclization reaction of the C ring. The lactamase-like protein GME11357 (or other beta-lactamases in Pestalotiopsis microspora) probably hydrolyzes the thioester bond between the ACP of pks8/GME11356 and the intermediate to release atrochrysone carboxylic acid, which is spontaneously dehydrates to form endocrocin anthrone. Endocrocin anthrone is further converted to emodin via the endocrocin intermediate. Emodin is then oxidized by several enzymes such as the Baeyer-Villiger oxidase GME11358, the oxidoreductase GME11367, the short chain dehydrogenase/reductase GME11373, as well as by other oxidoreductases from the cluster, to modify the A and C rings and open the B ring, and finally yield monodictyphenone. The prenyltransferase GME11375 may catalyze the addition reaction between the C5 side chains and the carbon bone of dibenzodioxocinones. The remaining biochemical reactions to the final product dibenzodioxocinones should be methylation catalyzed by methyltransferase GME11366 and reduction and lactonization reaction catalyzed by a series of oxidordeuctases. This chain is Oxidoreductase GME11367, found in Pestalotiopsis microspora.